Here is a 282-residue protein sequence, read N- to C-terminus: Large ribosomal subunit protein uL2 (282 aa).

The tract at residues 215 to 282 is disordered; it reads RHKGIRPTVR…IIRSRKETKK (68 aa). A compositionally biased stretch (basic residues) spans 263–282; sequence RNPKKPSTKLIIRSRKETKK.

Belongs to the universal ribosomal protein uL2 family. In terms of assembly, part of the 50S ribosomal subunit. Forms a bridge to the 30S subunit in the 70S ribosome.

Functionally, one of the primary rRNA binding proteins. Required for association of the 30S and 50S subunits to form the 70S ribosome, for tRNA binding and peptide bond formation. It has been suggested to have peptidyltransferase activity; this is somewhat controversial. Makes several contacts with the 16S rRNA in the 70S ribosome. In Mesomycoplasma hyopneumoniae (strain 7448) (Mycoplasma hyopneumoniae), this protein is Large ribosomal subunit protein uL2.